Here is a 687-residue protein sequence, read N- to C-terminus: Cytochrome b/c1 (687 aa).

A helical transmembrane segment spans residues 46–66; that stretch reads FGAILSFMLGMQILTGVILAM. Heme b is bound by residues His96 and His110. The next 2 helical transmembrane spans lie at 126 to 146 and 160 to 180; these read VLWILGVIIYLLMMATGFMGY and VITNLFSAIPYFGESIVTLLW. Heme b is bound by residues His197 and His211. A run of 6 helical transmembrane segments spans residues 199–219, 247–267, 305–325, 337–357, 363–383, and 410–430; these read LLPFLIAGVVVLHVWALHVAG, FGVACFLLLYAWFIFYMPNYL, LAGVIGMFSAIIILCFLPWLD, LAKQFFWIFVAVCILLGYLGA, IYVIAGRVLTVCYFAYFLIVL, and AVASVAIALVAAGALFLGSLQ. The tract at residues 404 to 434 is internal signal sequence; it reads LAKGGKAVASVAIALVAAGALFLGSLQDARA. Residues 458-643 enclose the Cytochrome c domain; sequence GALQRGLKVY…TVAQYSKDVT (186 aa). 4 residues coordinate heme c: Cys471, Cys474, His475, and Met616. The chain crosses the membrane as a helical span at residues 666 to 678; sequence VFLIIFAGLMYFT.

Belongs to the cytochrome b family. The main subunits of complex b-c1 are: cytochrome b, cytochrome c1 and the Rieske protein. Heme b is required as a cofactor. It depends on heme c as a cofactor. The protein is post-translationally processed into cytochrome b and c1. This occurs by processing between residues 434 and 435 without processing between cytochrome b and the N-terminal of the putative signal sequence domain.

Its subcellular location is the cell inner membrane. In terms of biological role, component of the ubiquinol-cytochrome c reductase complex (complex III or cytochrome b-c1 complex), which is a respiratory chain that generates an electrochemical potential coupled to ATP synthesis. c1 functions as an electron donor to cytochrome c. This chain is Cytochrome b/c1 (fbcH), found in Bradyrhizobium diazoefficiens (strain JCM 10833 / BCRC 13528 / IAM 13628 / NBRC 14792 / USDA 110).